A 488-amino-acid chain; its full sequence is UDP-GalNAc:beta-1,3-N-acetylgalactosaminyltransferase 2 (488 aa).

At 1-2 (MR) the chain is on the cytoplasmic side. A helical; Signal-anchor for type II membrane protein membrane pass occupies residues 3-23 (HLLLLFLCPCAIGVAFHLWLF). 3 N-linked (GlcNAc...) asparagine glycosylation sites follow: asparagine 24, asparagine 105, and asparagine 162. The Lumenal portion of the chain corresponds to 24–488 (NFSGLFTWFP…CGNPCACEDR (465 aa)).

It belongs to the glycosyltransferase 31 family.

It is found in the golgi apparatus membrane. It localises to the endoplasmic reticulum. The catalysed reaction is 3-O-(N-acetyl-beta-D-glucosaminyl-(1-&gt;4)-alpha-D-mannosyl)-L-threonyl-[protein] + UDP-N-acetyl-alpha-D-galactosamine = 3-O-[beta-D-GalNAc-(1-&gt;3)-beta-D-GlcNAc-(1-&gt;4)-alpha-D-Man]-L-Thr-[protein] + UDP + H(+). It functions in the pathway protein modification; protein glycosylation. In terms of biological role, beta-1,3-N-acetylgalactosaminyltransferase that synthesizes a unique carbohydrate structure, GalNAc-beta-1-3GlcNAc, on N- and O-glycans. Has no galactose nor galactosaminyl transferase activity toward any acceptor substrate. Involved in alpha-dystroglycan (dag1) glycosylation. This Xenopus tropicalis (Western clawed frog) protein is UDP-GalNAc:beta-1,3-N-acetylgalactosaminyltransferase 2 (b3galnt2).